A 350-amino-acid polypeptide reads, in one-letter code: WD repeat-containing protein DWA2 (350 aa).

WD repeat units follow at residues 39–79 (KEEN…FDQR), 118–158 (AHVG…KSAE), 166–205 (GMRHSLSGGAWNPHDVNSVAATSESSIQFWDLRTMKKNNS), 206–246 (IERA…FPVQ), 250–290 (GHTH…EHKT), and 311–350 (DYEDSVYGLAWSSREPWIFASLSYDGRVVIESVKPFLPRR).

In terms of assembly, interacts with ABI5 and DDB1A and DWA1.

Its subcellular location is the nucleus. Its pathway is protein modification; protein ubiquitination. Component of the CUL4-RBX1-DDB1-DWA1/DWA2 E3 ubiquitin-protein ligase complex that acts as a negative regulator in abscisic acid (ABA) signaling. May function as the substrate recognition module within this complex leading to ABI5 degradation. Functionally redundant with DWA1. This Arabidopsis thaliana (Mouse-ear cress) protein is WD repeat-containing protein DWA2 (DWA2).